A 281-amino-acid chain; its full sequence is Voltage-dependent L-type calcium channel subunit alpha-1S (281 aa).

Residues 1-8 form an III repeat; the sequence is VGFVIVTF. A dihydropyridine binding region spans residues 1–17; the sequence is VGFVIVTFQEQGESEYK. An IV repeat occupies 45-281; it reads NPYQYQIWYV…TCGTGFAYFY (237 aa). Residues 59 to 80 traverse the membrane as a helical segment; the sequence is YFEYLMFFLIMLNTICLGMQHY. N-linked (GlcNAc...) asparagine glycosylation is present at Asn-81. The helical transmembrane segment at 89–110 threads the bilayer; that stretch reads VSDILNVAFTVLFTLEMILKLM. A helical transmembrane segment spans residues 121–140; the sequence is PWNVFDFLIVIGSIIDVILS. Residues 153 to 171 form a helical membrane-spanning segment; that stretch reads ITFFRLFRVMRLVKLLSRG. Residues 190–210 form a helical membrane-spanning segment; the sequence is YVALLIVMLFFIYAVIGMQMF. The segment at residues 233–251 is an intramembrane region (pore-forming); that stretch reads AVLLLFRCATGEAWQEILL. The Selectivity filter of repeat IV signature appears at 242 to 245; the sequence is TGEA. A dihydropyridine binding region spans residues 258 to 281; sequence RCDPESDYAEGEEYTCGTGFAYFY. Cys-259 and Cys-273 are joined by a disulfide. The tract at residues 270-281 is phenylalkylamine binding; sequence EYTCGTGFAYFY.

It belongs to the calcium channel alpha-1 subunit (TC 1.A.1.11) family. CACNA1S subfamily. Component of a calcium channel complex consisting of a pore-forming alpha subunit (CACNA1S) and the ancillary subunits CACNB1 or CACNB2, CACNG1 and CACNA2D1. The channel complex contains alpha, beta, gamma and delta subunits in a 1:1:1:1 ratio, i.e. it contains either CACNB1 or CACNB2. CACNA1S channel activity is modulated by the auxiliary subunits (CACNB1 or CACNB2, CACNG1 and CACNA2D1). Interacts with DYSF and JSRP1. Interacts with RYR1. Interacts with CALM. In terms of processing, the alpha-1S subunit is found in two isoforms in the skeletal muscle: a minor form of 212 kDa containing the complete amino acid sequence, and a major form of 190 kDa derived from the full-length form by post-translational proteolysis close to Phe-1690. Both the minor and major forms are phosphorylated in vitro by PKA. Phosphorylation by PKA activates the calcium channel.

Its subcellular location is the cell membrane. It localises to the sarcolemma. It is found in the T-tubule. It carries out the reaction Ca(2+)(in) = Ca(2+)(out). With respect to regulation, channel activity is blocked by dihydropyridines (DHP), phenylalkylamines, and by benzothiazepines. Its function is as follows. Pore-forming, alpha-1S subunit of the voltage-gated calcium channel that gives rise to L-type calcium currents in skeletal muscle. Calcium channels containing the alpha-1S subunit play an important role in excitation-contraction coupling in skeletal muscle via their interaction with RYR1, which triggers Ca(2+) release from the sarcplasmic reticulum and ultimately results in muscle contraction. Long-lasting (L-type) calcium channels belong to the 'high-voltage activated' (HVA) group. This chain is Voltage-dependent L-type calcium channel subunit alpha-1S (CACNA1S), found in Gallus gallus (Chicken).